A 273-amino-acid polypeptide reads, in one-letter code: SUMO-1 cysteine protease S273R (273 aa).

Active-site residues include H168 and N187. Q226 contacts substrate. The active-site Nucleophile is C232.

This sequence belongs to the peptidase C63 family.

Its subcellular location is the host cytoplasm. The protein resides in the virion. In terms of biological role, cysteine protease that plays several role during infection including processing of the structural polyprotein or inhibition of the host immune response. Catalyzes the maturation of the pp220 and pp62 polyprotein precursors into core-shell proteins. Plays a role in the disruption of host pyroptosis via specific cleavage of gasdermin D/GSDMD. In addition, strongly decreases the host cGAS-STING signaling by targeting IKBKE via its enzymatic activity. Also impairs host FOXJ1-mediated antiviral effect via degradation of FOXJ1. The chain is SUMO-1 cysteine protease S273R from Ornithodoros (relapsing fever ticks).